Here is a 506-residue protein sequence, read N- to C-terminus: Chaperone SurA (506 aa).

An N-terminal signal peptide occupies residues 1 to 29; sequence MMRRLHSSRRFSGSLLALALGLALPLAHA. 2 consecutive PpiC domains span residues 219–320 and 351–450; these read PVML…KVLQ and VTQT…QVLE.

Its subcellular location is the periplasm. It catalyses the reaction [protein]-peptidylproline (omega=180) = [protein]-peptidylproline (omega=0). Functionally, chaperone involved in the correct folding and assembly of outer membrane proteins. Recognizes specific patterns of aromatic residues and the orientation of their side chains, which are found more frequently in integral outer membrane proteins. May act in both early periplasmic and late outer membrane-associated steps of protein maturation. This Bordetella avium (strain 197N) protein is Chaperone SurA.